A 117-amino-acid chain; its full sequence is DNA-directed RNA polymerase II subunit RPB11 (117 aa).

Methionine 1 carries the post-translational modification N-acetylmethionine.

It belongs to the archaeal Rpo11/eukaryotic RPB11/RPC19 RNA polymerase subunit family. In terms of assembly, component of the RNA polymerase II (Pol II) core complex consisting of 12 subunits: a ten-subunit catalytic core composed of POLR2A/RPB1, POLR2B/RPB2, POLR2C/RPB3, POLR2I/RPB9, POLR2J/RPB11, POLR2E/RPABC1, POLR2F/RPABC2, POLR2H/RPABC3, POLR2K/RPABC4 and POLR2L/RPABC5 and a mobile stalk composed of two subunits POLR2D/RPB4 and POLR2G/RPB7, protruding from the core and functioning primarily in transcription initiation. Part of Pol II(G) complex, in which Pol II core associates with an additional subunit POLR2M; unlike conventional Pol II, Pol II(G) functions as a transcriptional repressor. Part of TBP-based Pol II pre-initiation complex (PIC), in which Pol II core assembles with general transcription factors and other specific initiation factors including GTF2E1, GTF2E2, GTF2F1, GTF2F2, TCEA1, ERCC2, ERCC3, GTF2H2, GTF2H3, GTF2H4, GTF2H5, GTF2A1, GTF2A2, GTF2B and TBP; this large multi-subunit PIC complex mediates DNA unwinding and targets Pol II core to the transcription start site where the first phosphodiester bond forms. Interacts with AATF. Interacts with PTPN6; this interaction promotes the recruitment of RNA pol II to the PCK1 promoter.

Its subcellular location is the nucleus. Core component of RNA polymerase II (Pol II), a DNA-dependent RNA polymerase which synthesizes mRNA precursors and many functional non-coding RNAs using the four ribonucleoside triphosphates as substrates. In Mus musculus (Mouse), this protein is DNA-directed RNA polymerase II subunit RPB11 (Polr2j).